A 213-amino-acid chain; its full sequence is 3,4-dihydroxy-2-butanone 4-phosphate synthase (213 aa).

D-ribulose 5-phosphate contacts are provided by residues 37 to 38, aspartate 42, 150 to 154, and glutamate 174; these read RE and RSGHT. Glutamate 38 contributes to the Mg(2+) binding site. Histidine 153 contributes to the Mg(2+) binding site.

Belongs to the DHBP synthase family. In terms of assembly, homodimer. Mg(2+) serves as cofactor. It depends on Mn(2+) as a cofactor.

The catalysed reaction is D-ribulose 5-phosphate = (2S)-2-hydroxy-3-oxobutyl phosphate + formate + H(+). The protein operates within cofactor biosynthesis; riboflavin biosynthesis; 2-hydroxy-3-oxobutyl phosphate from D-ribulose 5-phosphate: step 1/1. In terms of biological role, catalyzes the conversion of D-ribulose 5-phosphate to formate and 3,4-dihydroxy-2-butanone 4-phosphate. This Blochmanniella floridana protein is 3,4-dihydroxy-2-butanone 4-phosphate synthase.